Here is a 204-residue protein sequence, read N- to C-terminus: Glycerol-3-phosphate acyltransferase (204 aa).

5 consecutive transmembrane segments (helical) span residues 12–32 (LVMG…HWLA), 85–105 (WQVA…WLGW), 117–137 (MLLG…LTVL), 142–162 (IVSL…ILRF), and 163–183 (QGNS…MVVW).

The protein belongs to the PlsY family. In terms of assembly, probably interacts with PlsX.

Its subcellular location is the cell inner membrane. It catalyses the reaction an acyl phosphate + sn-glycerol 3-phosphate = a 1-acyl-sn-glycero-3-phosphate + phosphate. It functions in the pathway lipid metabolism; phospholipid metabolism. Catalyzes the transfer of an acyl group from acyl-phosphate (acyl-PO(4)) to glycerol-3-phosphate (G3P) to form lysophosphatidic acid (LPA). This enzyme utilizes acyl-phosphate as fatty acyl donor, but not acyl-CoA or acyl-ACP. This is Glycerol-3-phosphate acyltransferase from Prochlorococcus marinus (strain MIT 9313).